Consider the following 348-residue polypeptide: Neuronal growth regulator 1 (348 aa).

Positions 1-31 (MVLLAQGACCSNQWLAAVLLSLCSCLPAGQS) are cleaved as a signal peptide. Ig-like C2-type domains lie at 32 to 128 (VDFP…VHLT), 133 to 215 (PKIY…RVVV), and 219 to 307 (PTIQ…LPLN). Residues C54 and C112 are joined by a disulfide bond. N-linked (GlcNAc...) asparagine glycans are attached at residues N67 and N149. Disulfide bonds link C154-C197 and C239-C291. Phosphotyrosine is present on Y181. N269, N280, N288, and N301 each carry an N-linked (GlcNAc...) asparagine glycan. The GPI-anchor amidated glycine moiety is linked to residue G318. Residues 319-348 (SACDLFSCWSLALTLSSVISIFYLKNAILQ) constitute a propeptide, removed in mature form.

This sequence belongs to the immunoglobulin superfamily. IgLON family. Post-translationally, glycosylated. As to expression, highly expressed in brain.

Its subcellular location is the cell membrane. May be involved in cell-adhesion. May function as a trans-neural growth-promoting factor in regenerative axon sprouting in the mammalian brain. In Rattus norvegicus (Rat), this protein is Neuronal growth regulator 1 (Negr1).